We begin with the raw amino-acid sequence, 32 residues long: Beta-hexosaminidase (32 aa).

The region spanning 1 to 32 (GKSSSRPLGDATLGDLDFDIEVTQDYWDDLAR) is the GH18 domain. Glutamate 21 (proton donor) is an active-site residue.

Belongs to the glycosyl hydrolase 18 family. Chitinase class II subfamily.

The enzyme catalyses Hydrolysis of terminal non-reducing N-acetyl-D-hexosamine residues in N-acetyl-beta-D-hexosaminides.. With respect to regulation, activity is decreased by HgCl(2) and maltose. Activity is stimulated by Na(2)SeO(4), BaCl(2), MgCl(2), chondroitin 6-sulfate and phenylmethylsulfonyl fluoride. Preferentially hydrolyzes pNP-GlcNAc, hydrolyzes pNP-GalNAc to a lesser extent. This is Beta-hexosaminidase from Palythoa caribaeorum (White encrusting zoanthid coral).